A 1713-amino-acid chain; its full sequence is MNENEFSTNSLINQQGTNNNNNNNTNNNITNINFGTENNNNSPIINNNNNNNNNNNNNINIVESPPLVIRQQQLFNNFQQLNTPPTTPNTSTPSTPTSSRNNNNNNNNNIDFYNSKFLPPKPKSLNNSGNYLNNNNNINNNNNNNNNNHHNNNNNNNNNINFTNLSNSGNSLKFNKNMSDITNDNSNSSSNAGSNSKLSNSNGCSNLLTSSFNNILNSTNVQVVSGNNNYHNGNNENGNNTFHVGNNLNNNNNNNNIGSSGGNNSHHHHNHSHHNSGNHQNGGSNGQPLSYSYDNLFNNLYADIQHPHQYLSNHSGNNINNTSQSNNNNNNNNNNNNNNNNNNNNNNNNSNNNNNNNSNNNNNNNNNNNNNNNNNNNNNSNNSNSNNTNNSNSNHNNNNNHNNNNNNNNNNSNNNNIHGNSNNNNNNNHGSSYVTPSSDISSPSPPSSTSMASIVSSPPVQVSPLQSPASHLSPMSPSNNFGGNHNNYNHAHHSHHNNHAHHNTHNYNNNNNNNNNNNNNNNNNNNNSNNSNNNSNTNNNGNNGNNSNNNNNHPMSHIDAFNKVTQLTSTTSTSIPKKLKRDYEQTFSKDEWEDYTPPSKYFQLFSYSKSEMSGSFSFKVKRTDKNIQYSELDSAWILYRQNRFQVDCDLIGSLESWSNLDRNNTIFVNSNNNNNNNNNNNNNNDNGDLSEVNGLFFTLYVLKFTDANNIQSSNDQNDRVPIHQLGGATGKKDRLTVEPSPVVKGRGCWNKLQFGSATSNNARVHPDQPNPNQQFFRVVITLNAVIDKNFENQNFTTPQFYPIQSKISPPMIVRGQNPGRFLNHDKSLKKDPNSSPNGGKGGGGSGSGGMGGGMGGGMGNNGSSGSSSNGGYGNGSANKHMKTFLNTSNSDNSDDDQSPTTTTTTTTTTTTPTPTPTTTTTTTNETTTSTIPTTTPLPKTPSPTLTAPSITTTLDGNNTSIFNGPCDLTTIDPLTFSNLLQDPLILGQTMMVDIDSNNILNNINTNSTINNNNNNNNTNSDDLMVYDPQTTLDLANLIQQQQLHQQQQLSNLKAAQAAAAIAASIANTTSTPNTTSTDIQNPFNFLNNPLTNTNIQQSLFLNQNIPGVSTNQMINSLNLANGLLQNTTTPQSHHTILEINNNHHHHQQQQQQPITTTTTTTTTIPSTPQPSQQSMTNSGGSSSTNSSISRKNKFAKWNTNPFMEEVIYTNNKVGINTTTPTQALAVNGNILVTGELFKPSDQRIKSNIRLDNTDHWDKINRLKIYDYDRKKMMGYDDPNNNGTTQESTTVKEKGFLAQEVKEVLPNAVKVAGEVKLQDGTTVPNLLVVNDRVLLLENIGATQQIGRSLKKEKDHIVKIDRDLDRVKIEGSREKHVILTRMQDMVNFMHSEESERSNNNNEESCVYCSLMGFGPAWTMFVFGFFIPICWIIGSFYLFSPTRVKWVSGLMNFVATIIFILALSLMTFYVPELAALIIAPALIVMGFVVCILVGFFRQRNREKKRYLRERIKLMQADGYKNLADHVSSFRVDYNQHQAKANNNMLKKKKKRIQMEKLNSQRNYGGINTTDKINNSNINNIGINNPNNIQNNQINNILNNSNNNINNNNQERLSDSSKSSFIDDFKKSSSNNHKDFHEIPLQEIIQSIGIKGKKQSSSSAKTRSLSSSNLVNSVNSNLVNSTNSNNTSILLKSHNSNSPLFNSTPTPTNVVFNSIEV.

Residues 1–12 are compositionally biased toward polar residues; it reads MNENEFSTNSLI. Disordered stretches follow at residues 1–35, 79–200, 226–290, 309–557, 713–734, 808–952, and 1143–1190; these read MNEN…INFG, QQLN…KLSN, GNNN…QPLS, QYLS…PMSH, SNDQ…KKDR, SPPM…SITT, and HHHH…SISR. Composition is skewed to low complexity over residues 13-35, 79-109, 126-170, 177-200, and 226-264; these read NQQG…INFG, QQLN…NNNN, NNSG…NSGN, NMSD…KLSN, and GNNN…GGNN. A compositionally biased stretch (basic residues) spans 265-276; that stretch reads SHHHHNHSHHNS. 2 stretches are compositionally biased toward low complexity: residues 317-470 and 478-489; these read NNIN…SPAS and SNNFGGNHNNYN. Positions 490-504 are enriched in basic residues; the sequence is HAHHSHHNNHAHHNT. Residues 505 to 553 are compositionally biased toward low complexity; it reads HNYNNNNNNNNNNNNNNNNNNNNSNNSNNNSNTNNNGNNGNNSNNNNNH. The segment at residues 544-825 is a DNA-binding region (NDT80); that stretch reads GNNSNNNNNH…QNPGRFLNHD (282 aa). Basic and acidic residues predominate over residues 822-832; the sequence is LNHDKSLKKDP. The segment covering 838 to 874 has biased composition (gly residues); sequence GGKGGGGSGSGGMGGGMGGGMGNNGSSGSSSNGGYGN. Low complexity-rich tracts occupy residues 898-946 and 1148-1189; these read SPTT…PTLT and QQQQ…SSIS. One can recognise a Peptidase S74 domain in the interval 1240-1355; the sequence is SDQRIKSNIR…RSLKKEKDHI (116 aa). 3 consecutive transmembrane segments (helical) span residues 1416 to 1436, 1447 to 1467, and 1473 to 1493; these read TMFV…FYLF, LMNF…TFYV, and LIIA…VGFF. The span at 1596–1605 shows a compositional bias: low complexity; that stretch reads NSNNNINNNN. 2 disordered regions span residues 1596–1634 and 1646–1665; these read NSNN…DFHE and IKGK…SSSN. Residues 1617–1634 are compositionally biased toward basic and acidic residues; it reads FIDDFKKSSSNNHKDFHE.

The protein resides in the membrane. This is an uncharacterized protein from Dictyostelium discoideum (Social amoeba).